Consider the following 648-residue polypeptide: 1-deoxy-D-xylulose-5-phosphate synthase (648 aa).

Thiamine diphosphate contacts are provided by residues His73 and 114–116 (SHA). Mg(2+) is bound at residue Asp145. Thiamine diphosphate contacts are provided by residues 146–147 (GA), Asn175, Tyr286, and Glu367. Residue Asn175 coordinates Mg(2+).

This sequence belongs to the transketolase family. DXPS subfamily. As to quaternary structure, homodimer. The cofactor is Mg(2+). Requires thiamine diphosphate as cofactor.

It carries out the reaction D-glyceraldehyde 3-phosphate + pyruvate + H(+) = 1-deoxy-D-xylulose 5-phosphate + CO2. It functions in the pathway metabolic intermediate biosynthesis; 1-deoxy-D-xylulose 5-phosphate biosynthesis; 1-deoxy-D-xylulose 5-phosphate from D-glyceraldehyde 3-phosphate and pyruvate: step 1/1. Functionally, catalyzes the acyloin condensation reaction between C atoms 2 and 3 of pyruvate and glyceraldehyde 3-phosphate to yield 1-deoxy-D-xylulose-5-phosphate (DXP). This chain is 1-deoxy-D-xylulose-5-phosphate synthase, found in Rhodococcus erythropolis (strain PR4 / NBRC 100887).